A 218-amino-acid polypeptide reads, in one-letter code: Small ribosomal subunit protein uS3 (218 aa).

The 69-residue stretch at 38–106 (IREYLTKRLS…RVHINIVEIK (69 aa)) folds into the KH type-2 domain.

Belongs to the universal ribosomal protein uS3 family. In terms of assembly, part of the 30S ribosomal subunit. Forms a tight complex with proteins S10 and S14.

Functionally, binds the lower part of the 30S subunit head. Binds mRNA in the 70S ribosome, positioning it for translation. This is Small ribosomal subunit protein uS3 from Anoxybacillus flavithermus (strain DSM 21510 / WK1).